A 166-amino-acid chain; its full sequence is 16S rRNA aminocarboxypropyltransferase (166 aa).

Positions 17, 62, 84, 99, and 103 each coordinate S-adenosyl-L-methionine.

It belongs to the TDD superfamily. TSR3 family.

The protein resides in the cytoplasm. The catalysed reaction is an N(1)-methylpseudouridine in rRNA + S-adenosyl-L-methionine = N(1)-methyl-N(3)-[(3S)-3-amino-3-carboxypropyl]pseudouridine in rRNA + S-methyl-5'-thioadenosine + H(+). Its function is as follows. Aminocarboxypropyltransferase that catalyzes the aminocarboxypropyl transfer on pseudouridine corresponding to position 914 in M.jannaschii 16S rRNA. It constitutes the last step in biosynthesis of the hypermodified N1-methyl-N3-(3-amino-3-carboxypropyl) pseudouridine (m1acp3-Psi). The sequence is that of 16S rRNA aminocarboxypropyltransferase from Saccharolobus solfataricus (strain ATCC 35092 / DSM 1617 / JCM 11322 / P2) (Sulfolobus solfataricus).